The primary structure comprises 185 residues: Elongation factor P (185 aa).

The protein belongs to the elongation factor P family.

It localises to the cytoplasm. It functions in the pathway protein biosynthesis; polypeptide chain elongation. Functionally, involved in peptide bond synthesis. Stimulates efficient translation and peptide-bond synthesis on native or reconstituted 70S ribosomes in vitro. Probably functions indirectly by altering the affinity of the ribosome for aminoacyl-tRNA, thus increasing their reactivity as acceptors for peptidyl transferase. The polypeptide is Elongation factor P (Thermoanaerobacter sp. (strain X514)).